The sequence spans 262 residues: Phosphomannomutase 1 (262 aa).

Ala-2 bears the N-acetylalanine mark. Asp-19 serves as the catalytic Nucleophile. 2 residues coordinate Mg(2+): Asp-19 and Asp-21. Asp-21 acts as the Proton donor/acceptor in catalysis. Arg-28, Arg-132, Arg-143, Arg-150, Met-186, Ser-188, and Asp-190 together coordinate alpha-D-mannose 1-phosphate. Residues Asn-218, Phe-230, Asp-232, and Thr-235 each contribute to the Mg(2+) site. The residue at position 242 (Ser-242) is a Phosphoserine.

It belongs to the eukaryotic PMM family. As to quaternary structure, homodimer. The cofactor is Mg(2+). As to expression, strong expression in liver, heart, brain, and pancreas; lower expression in skeletal muscle.

The protein resides in the cytoplasm. The catalysed reaction is alpha-D-mannose 1-phosphate = D-mannose 6-phosphate. The protein operates within nucleotide-sugar biosynthesis; GDP-alpha-D-mannose biosynthesis; alpha-D-mannose 1-phosphate from D-fructose 6-phosphate: step 2/2. IMP, a metabolite whose concentration is elevated in anoxia, inhibits phosphomannomutase and phosphoglucomutase activities and strongly enhances glucose-1,6-bisphosphatase activity. Functionally, involved in the synthesis of the GDP-mannose and dolichol-phosphate-mannose required for a number of critical mannosyl transfer reactions. In addition, may be responsible for the degradation of glucose-1,6-bisphosphate in ischemic brain. This is Phosphomannomutase 1 (PMM1) from Homo sapiens (Human).